The chain runs to 380 residues: Anhydro-N-acetylmuramic acid kinase (380 aa).

9–16 (GTSADGVD) serves as a coordination point for ATP.

It belongs to the anhydro-N-acetylmuramic acid kinase family.

The catalysed reaction is 1,6-anhydro-N-acetyl-beta-muramate + ATP + H2O = N-acetyl-D-muramate 6-phosphate + ADP + H(+). Its pathway is amino-sugar metabolism; 1,6-anhydro-N-acetylmuramate degradation. It functions in the pathway cell wall biogenesis; peptidoglycan recycling. Functionally, catalyzes the specific phosphorylation of 1,6-anhydro-N-acetylmuramic acid (anhMurNAc) with the simultaneous cleavage of the 1,6-anhydro ring, generating MurNAc-6-P. Is required for the utilization of anhMurNAc either imported from the medium or derived from its own cell wall murein, and thus plays a role in cell wall recycling. This is Anhydro-N-acetylmuramic acid kinase from Synechococcus sp. (strain CC9902).